A 327-amino-acid chain; its full sequence is MSELSDEEISLQALYDPSKKVIGDIEDGIFSTPELQPRIKTGIDNLQLVTKLVNQMRLFSSNEQIEDVPTNSLPYLLVPCFLGILHQNLMTEPGLKLDELRKSKIYMRNFLDRLRDLCLITTRLPWEDEDTEEQNLKEKPKLAVEEIRRLKLERHKKKQELKMAELRIQKQLEAVSIDEQNLRELYITQLLFWSERCYEELQAIDDELPLLKMMAERASHPHRHPAPPPATKTVPTLKPFIITRDAQQKQVFGLGYPGIPAMSVDEWYHQKFGHNPQNAPQSSAPAGAEAQESEEEVDDDEARAKAMRWDEYKDDHRRGWGNMHNKG.

Residues 141 to 185 (KLAVEEIRRLKLERHKKKQELKMAELRIQKQLEAVSIDEQNLREL) are a coiled coil. The disordered stretch occupies residues 271–327 (KFGHNPQNAPQSSAPAGAEAQESEEEVDDDEARAKAMRWDEYKDDHRRGWGNMHNKG). Polar residues predominate over residues 275 to 284 (NPQNAPQSSA). Over residues 291–301 (QESEEEVDDDE) the composition is skewed to acidic residues. The span at 302 to 318 (ARAKAMRWDEYKDDHRR) shows a compositional bias: basic and acidic residues.

Serine/threonine-protein phosphatase 4 (PP4) occurs in different assemblies of the catalytic and one or more regulatory subunits. The catalytic subunit is likely to be pph-4.1.

Probable regulatory subunit of serine/threonine-protein phosphatase PP4 which may play a role in meiosis and embryonic mitosis. Probably in association with catalytic subunit pph-4.1, regulates microtubule severing during oocyte meiosis II by dephosphorylating and likely activating mei-1, a component of the katanin microtubule severing complex. The chain is Serine/threonine-protein phosphatase 4 regulatory subunit ppfr-4 from Caenorhabditis elegans.